The primary structure comprises 352 residues: Phosphate acyltransferase (352 aa).

Over residues 328-339 (ESFPGDAREREG) the composition is skewed to basic and acidic residues. Residues 328–352 (ESFPGDAREREGAQAPDAGTERVAS) are disordered.

This sequence belongs to the PlsX family. Homodimer. Probably interacts with PlsY.

The protein localises to the cytoplasm. The enzyme catalyses a fatty acyl-[ACP] + phosphate = an acyl phosphate + holo-[ACP]. Its pathway is lipid metabolism; phospholipid metabolism. Its function is as follows. Catalyzes the reversible formation of acyl-phosphate (acyl-PO(4)) from acyl-[acyl-carrier-protein] (acyl-ACP). This enzyme utilizes acyl-ACP as fatty acyl donor, but not acyl-CoA. This Geobacter sp. (strain M21) protein is Phosphate acyltransferase.